A 558-amino-acid polypeptide reads, in one-letter code: N-acetylglucosamine-6-O-sulfatase (558 aa).

3-oxoalanine (Ser) is present on Ser101.

The protein belongs to the sulfatase family. Post-translationally, the conversion to 3-oxoalanine (also known as C-formylglycine, FGly), of a serine or cysteine residue in prokaryotes and of a cysteine residue in eukaryotes, is critical for catalytic activity.

Exosulfatase involved in the degradation of the glycosaminoglycan (GAG) heparan sulfate (HS). Catalyzes the hydrolysis of the 6-sulfate groups of the N-acetyl-D-glucosamine 6-sulfate units. GAG-specific sulfatases play a key role in the persistence of the major human gut symbiont B.thetaiotaomicron in the host gastrointestinal tract. This chain is N-acetylglucosamine-6-O-sulfatase, found in Bacteroides thetaiotaomicron (strain ATCC 29148 / DSM 2079 / JCM 5827 / CCUG 10774 / NCTC 10582 / VPI-5482 / E50).